A 1978-amino-acid polypeptide reads, in one-letter code: Sodium channel protein type 8 subunit alpha (1978 aa).

2 disordered regions span residues methionine 1–glutamate 20 and arginine 28–glycine 62. The Cytoplasmic segment spans residues methionine 1–serine 132. Residues arginine 28–alanine 61 are compositionally biased toward basic and acidic residues. The I repeat unit spans residues isoleucine 114 to glutamine 442. The chain crosses the membrane as a helical span at residues valine 133–phenylalanine 151. The Extracellular portion of the chain corresponds to serine 152–serine 158. The helical transmembrane segment at lysine 159–alanine 179 threads the bilayer. At arginine 180–proline 193 the chain is on the cytoplasmic side. Residues tryptophan 194–valine 211 form a helical membrane-spanning segment. The Extracellular segment spans residues aspartate 212–serine 217. The N-linked (GlcNAc...) asparagine glycan is linked to asparagine 215. The helical transmembrane segment at alanine 218–isoleucine 234 threads the bilayer. The Cytoplasmic portion of the chain corresponds to proline 235–aspartate 253. The helical transmembrane segment at valine 254–phenylalanine 273 threads the bilayer. Over methionine 274–threonine 355 the chain is Extracellular. Cysteine 281 and cysteine 333 are oxidised to a cystine. N-linked (GlcNAc...) asparagine glycosylation is found at asparagine 289, asparagine 295, asparagine 308, and asparagine 326. The segment at residues phenylalanine 356–leucine 380 is an intramembrane region (pore-forming). Glutamate 373 contributes to the Na(+) binding site. Topologically, residues arginine 381–tyrosine 387 are extracellular. The chain crosses the membrane as a helical span at residues methionine 388–alanine 408. The Cytoplasmic segment spans residues valine 409 to proline 751. Disordered stretches follow at residues alanine 446–arginine 530 and aspartate 576–arginine 597. The segment covering serine 473–lysine 486 has biased composition (low complexity). Positions lysine 489–glutamine 500 are enriched in basic residues. Basic and acidic residues-rich tracts occupy residues lysine 501 to arginine 530 and aspartate 586 to arginine 597. Phosphoserine is present on residues serine 518 and serine 520. One copy of the II repeat lies at cysteine 733–glycine 1005. Residues phenylalanine 752–methionine 770 form a helical membrane-spanning segment. At glutamate 771 to histidine 781 the chain is on the extracellular side. The helical transmembrane segment at valine 782–lysine 801 threads the bilayer. Over leucine 802 to tryptophan 815 the chain is Cytoplasmic. Residues asparagine 816–valine 835 form a helical membrane-spanning segment. At glutamate 836–glycine 837 the chain is on the extracellular side. Residues leucine 838–serine 855 traverse the membrane as a helical segment. Over tryptophan 856–glycine 871 the chain is Cytoplasmic. Residues alanine 872–valine 890 form a helical membrane-spanning segment. The Extracellular portion of the chain corresponds to glycine 891–aspartate 919. Cysteine 904 and cysteine 910 are oxidised to a cystine. An intramembrane region (pore-forming) is located at residues phenylalanine 920–tryptophan 940. Residues glutamate 934 and glutamate 937 each coordinate Na(+). Over aspartate 941–isoleucine 953 the chain is Extracellular. An intrachain disulfide couples cysteine 942 to cysteine 951. Residues valine 954–leucine 974 form a helical membrane-spanning segment. The Cytoplasmic segment spans residues leucine 975 to tryptophan 1197. The interval asparagine 1105–valine 1146 is disordered. An III repeat occupies leucine 1178 to leucine 1493. Residues phenylalanine 1198 to phenylalanine 1215 traverse the membrane as a helical segment. At glutamate 1216 to threonine 1228 the chain is on the extracellular side. Residues isoleucine 1229–leucine 1247 traverse the membrane as a helical segment. Residues lysine 1248 to alanine 1261 lie on the Cytoplasmic side of the membrane. A helical membrane pass occupies residues tryptophan 1262–asparagine 1280. Over alanine 1281–glycine 1288 the chain is Extracellular. A helical transmembrane segment spans residues alanine 1289–arginine 1307. Residues phenylalanine 1308–serine 1324 lie on the Cytoplasmic side of the membrane. The helical transmembrane segment at isoleucine 1325–valine 1344 threads the bilayer. Over asparagine 1345 to valine 1397 the chain is Extracellular. Cysteine 1354 and cysteine 1374 form a disulfide bridge. Residues asparagine 1356, asparagine 1370, and asparagine 1381 are each glycosylated (N-linked (GlcNAc...) asparagine). Positions glycine 1398–alanine 1419 form an intramembrane region, pore-forming. Residues alanine 1420–isoleucine 1436 are Extracellular-facing. Residues tyrosine 1437–isoleucine 1458 form a helical membrane-spanning segment. Topologically, residues glycine 1459–alanine 1521 are cytoplasmic. Serine 1495 bears the Phosphoserine; by PKC mark. One copy of the IV repeat lies at isoleucine 1502–glutamine 1799. The helical transmembrane segment at phenylalanine 1522 to valine 1539 threads the bilayer. At glutamate 1540 to asparagine 1550 the chain is on the extracellular side. The chain crosses the membrane as a helical span at residues isoleucine 1551 to leucine 1569. Topologically, residues lysine 1570–isoleucine 1581 are cytoplasmic. Residues glycine 1582 to phenylalanine 1599 traverse the membrane as a helical segment. At leucine 1600–threonine 1612 the chain is on the extracellular side. Residues leucine 1613 to isoleucine 1629 traverse the membrane as a helical segment. Topologically, residues lysine 1630 to alanine 1648 are cytoplasmic. The chain crosses the membrane as a helical span at residues leucine 1649–phenylalanine 1666. At glycine 1667 to threonine 1688 the chain is on the extracellular side. The pore-forming intramembrane region spans phenylalanine 1689–proline 1711. The Extracellular portion of the chain corresponds to isoleucine 1712–glycine 1740. Residues cysteine 1719 and cysteine 1734 are joined by a disulfide bond. The helical transmembrane segment at isoleucine 1741–isoleucine 1763 threads the bilayer. The Cytoplasmic segment spans residues leucine 1764–cysteine 1978. The IQ domain occupies glutamate 1893–lysine 1922. The tract at residues leucine 1923–cysteine 1978 is disordered. Over residues threonine 1936–serine 1947 the composition is skewed to polar residues. A compositionally biased stretch (basic and acidic residues) spans threonine 1949–cysteine 1978.

It belongs to the sodium channel (TC 1.A.1.10) family. Nav1.6/SCN8A subfamily. The voltage-sensitive sodium channel consists of an ion-conducting pore-forming alpha subunit regulated by one or more beta-1 (SCN1B), beta-2 (SCN2B), beta-3 (SCN3B) and/or beta-4 (SCN4B) subunits. Beta-1 (SCN1B) and beta-3 (SCN3B) are non-covalently associated with alpha, while beta-2 (SCN2B) and beta-4 (SCN4B) are covalently linked by disulfide bonds. Interacts with NEDD4 and NEDD4L. Interacts with FGF13. Interacts with FGF14, GBG3, GBB2 and SCN1B. Interacts with TMEM233. Interacts with the conotoxin GVIIJ. Interacts with CALM1; the interaction modulates the inactivation rate of SCN8A. Post-translationally, may be ubiquitinated by NEDD4L; which would promote its endocytosis. Phosphorylation at Ser-1495 by PKC in a highly conserved cytoplasmic loop slows inactivation of the sodium channel and reduces peak sodium currents. In terms of tissue distribution, isoform 1 is highly expressed in brain, moderately in spinal cord, and at low levels in dorsal root ganglia, nodose ganglia and superior cervical ganglia. Not detected in sciatic nerve and non-neuronal tissues. Isoform 2 is hardly detectable, if at all, in brain, expressed at low levels in spinal cord and at highest levels in dorsal root ganglia.

The protein localises to the cell membrane. Its subcellular location is the cell projection. It localises to the axon. The catalysed reaction is Na(+)(in) = Na(+)(out). In terms of biological role, pore-forming subunit of a voltage-gated sodium channel complex assuming opened or closed conformations in response to the voltage difference across membranes and through which sodium ions selectively pass along their electrochemical gradient. Contributes to neuronal excitability by regulating action potential threshold and propagation. This is Sodium channel protein type 8 subunit alpha from Rattus norvegicus (Rat).